Reading from the N-terminus, the 98-residue chain is uncharacterized protein (98 aa).

This is an uncharacterized protein from Acidianus two-tailed virus (ATV).